Consider the following 338-residue polypeptide: Holliday junction branch migration complex subunit RuvB (338 aa).

The segment at 1–181 (MDRIVEIEKV…FGMDFRLQFY (181 aa)) is large ATPase domain (RuvB-L). Residues Leu20, Arg21, Gly62, Lys65, Thr66, Thr67, 128–130 (EDF), Arg171, Tyr181, and Arg218 contribute to the ATP site. Mg(2+) is bound at residue Thr66. Residues 182–252 (STAELSRIIQ…RAKEGLNALG (71 aa)) form a small ATPAse domain (RuvB-S) region. Residues 255–338 (SLGFDEMDIK…NRTKGLFDGE (84 aa)) form a head domain (RuvB-H) region. Residues Arg309 and Arg314 each coordinate DNA.

It belongs to the RuvB family. Homohexamer. Forms an RuvA(8)-RuvB(12)-Holliday junction (HJ) complex. HJ DNA is sandwiched between 2 RuvA tetramers; dsDNA enters through RuvA and exits via RuvB. An RuvB hexamer assembles on each DNA strand where it exits the tetramer. Each RuvB hexamer is contacted by two RuvA subunits (via domain III) on 2 adjacent RuvB subunits; this complex drives branch migration. In the full resolvosome a probable DNA-RuvA(4)-RuvB(12)-RuvC(2) complex forms which resolves the HJ.

The protein resides in the cytoplasm. It carries out the reaction ATP + H2O = ADP + phosphate + H(+). Functionally, the RuvA-RuvB-RuvC complex processes Holliday junction (HJ) DNA during genetic recombination and DNA repair, while the RuvA-RuvB complex plays an important role in the rescue of blocked DNA replication forks via replication fork reversal (RFR). RuvA specifically binds to HJ cruciform DNA, conferring on it an open structure. The RuvB hexamer acts as an ATP-dependent pump, pulling dsDNA into and through the RuvAB complex. RuvB forms 2 homohexamers on either side of HJ DNA bound by 1 or 2 RuvA tetramers; 4 subunits per hexamer contact DNA at a time. Coordinated motions by a converter formed by DNA-disengaged RuvB subunits stimulates ATP hydrolysis and nucleotide exchange. Immobilization of the converter enables RuvB to convert the ATP-contained energy into a lever motion, pulling 2 nucleotides of DNA out of the RuvA tetramer per ATP hydrolyzed, thus driving DNA branch migration. The RuvB motors rotate together with the DNA substrate, which together with the progressing nucleotide cycle form the mechanistic basis for DNA recombination by continuous HJ branch migration. Branch migration allows RuvC to scan DNA until it finds its consensus sequence, where it cleaves and resolves cruciform DNA. The chain is Holliday junction branch migration complex subunit RuvB from Campylobacter curvus (strain 525.92).